The following is a 450-amino-acid chain: tRNA modification GTPase MnmE (450 aa).

(6S)-5-formyl-5,6,7,8-tetrahydrofolate contacts are provided by Arg26, Glu84, and Lys123. The TrmE-type G domain occupies 219-376 (GMHVVLVGQP…LKAKLLEMIG (158 aa)). Asn229 contributes to the K(+) binding site. Residues 229 to 234 (NVGKSS), 248 to 254 (TDIAGTT), 273 to 276 (DTAG), and 357 to 359 (SAR) each bind GTP. Ser233 is a Mg(2+) binding site. K(+)-binding residues include Thr248, Ile250, and Thr253. Thr254 contributes to the Mg(2+) binding site. Lys450 is a (6S)-5-formyl-5,6,7,8-tetrahydrofolate binding site.

Belongs to the TRAFAC class TrmE-Era-EngA-EngB-Septin-like GTPase superfamily. TrmE GTPase family. In terms of assembly, homodimer. Heterotetramer of two MnmE and two MnmG subunits. Requires K(+) as cofactor.

The protein resides in the cytoplasm. Functionally, exhibits a very high intrinsic GTPase hydrolysis rate. Involved in the addition of a carboxymethylaminomethyl (cmnm) group at the wobble position (U34) of certain tRNAs, forming tRNA-cmnm(5)s(2)U34. This Chromobacterium violaceum (strain ATCC 12472 / DSM 30191 / JCM 1249 / CCUG 213 / NBRC 12614 / NCIMB 9131 / NCTC 9757 / MK) protein is tRNA modification GTPase MnmE.